Here is a 184-residue protein sequence, read N- to C-terminus: 20.9 kDa protein (184 aa).

The protein is 20.9 kDa protein of Zymomonas mobilis subsp. mobilis (strain ATCC 10988 / DSM 424 / LMG 404 / NCIMB 8938 / NRRL B-806 / ZM1).